Consider the following 445-residue polypeptide: Putative H/ACA ribonucleoprotein complex subunit 4 (445 aa).

Residues 1–32 (MGKKDKRSKLEGDELAEAQQKGSFQLPSSNET) are disordered. A compositionally biased stretch (polar residues) spans 20–32 (QKGSFQLPSSNET). Asp113 (nucleophile) is an active-site residue. Positions 284–359 (HKRVVVKDSC…IVAKSKRVIM (76 aa)) constitute a PUA domain. Residues 407–445 (TDKVKKEQEDKEDEEEEEAPKKKSKKAAKKEVSSSSDSE) form a disordered region.

Belongs to the pseudouridine synthase TruB family. As to quaternary structure, component of the small nucleolar ribonucleoprotein particle containing H/ACA-type snoRNAs (H/ACA snoRNPs).

It is found in the nucleus. It localises to the nucleolus. The catalysed reaction is a uridine in RNA = a pseudouridine in RNA. Its function is as follows. Plays a central role in ribosomal RNA processing. Probable catalytic subunit of H/ACA small nucleolar ribonucleoprotein (H/ACA snoRNP) complex, which catalyzes pseudouridylation of rRNA. This involves the isomerization of uridine such that the ribose is subsequently attached to C5, instead of the normal N1. Pseudouridine ('psi') residues may serve to stabilize the conformation of rRNAs. The chain is Putative H/ACA ribonucleoprotein complex subunit 4 from Caenorhabditis briggsae.